A 548-amino-acid chain; its full sequence is T-complex protein 1 subunit theta (548 aa).

Ala2 is subject to N-acetylalanine. Ser23 carries the phosphoserine modification. Residue Tyr30 is modified to Phosphotyrosine. Positions 47 and 48 each coordinate ADP. Residue Asp99 coordinates Mg(2+). 4 residues coordinate ADP: Gly100, Thr101, Asn102, and Phe103. ATP is bound by residues Gly100, Thr101, and Asn102. Position 162 is a phosphoserine (Ser162). ADP contacts are provided by Met169, Ser170, and Lys171. Residues Ser170 and Lys171 each coordinate ATP. A Phosphoserine modification is found at Ser213. Glycyl lysine isopeptide (Lys-Gly) (interchain with G-Cter in SUMO2) cross-links involve residues Lys224, Lys254, and Lys260. Phosphoserine is present on residues Ser269 and Ser317. Lys318 and Lys400 each carry N6-acetyllysine. Gly412 is a binding site for ADP. Gly412 serves as a coordination point for ATP. Lys459 is covalently cross-linked (Glycyl lysine isopeptide (Lys-Gly) (interchain with G-Cter in SUMO1)). Lys466 carries the post-translational modification N6-acetyllysine. Residue Asp499 participates in ADP binding. ATP is bound by residues Asp499 and Lys504. Tyr505 carries the phosphotyrosine modification. Positions 529 to 548 are disordered; the sequence is PAGGPKPPSGKKDWDDDQND. Lys534 participates in a covalent cross-link: Glycyl lysine isopeptide (Lys-Gly) (interchain with G-Cter in SUMO2). At Ser537 the chain carries Phosphoserine. A Glycyl lysine isopeptide (Lys-Gly) (interchain with G-Cter in SUMO2) cross-link involves residue Lys539.

It belongs to the TCP-1 chaperonin family. As to quaternary structure, component of the chaperonin-containing T-complex (TRiC), a hexadecamer composed of two identical back-to-back stacked rings enclosing a protein folding chamber. Each ring is made up of eight different subunits: TCP1/CCT1, CCT2, CCT3, CCT4, CCT5, CCT6A/CCT6, CCT7, CCT8. Interacts with PACRG. Interacts with DNAAF4. Interacts with synaptic plasticity regulator PANTS.

The protein resides in the cytoplasm. Its subcellular location is the cytoskeleton. It localises to the microtubule organizing center. The protein localises to the centrosome. It is found in the cilium basal body. The enzyme catalyses ATP + H2O = ADP + phosphate + H(+). In terms of biological role, component of the chaperonin-containing T-complex (TRiC), a molecular chaperone complex that assists the folding of actin, tubulin and other proteins upon ATP hydrolysis. The TRiC complex mediates the folding of WRAP53/TCAB1, thereby regulating telomere maintenance. As part of the TRiC complex may play a role in the assembly of BBSome, a complex involved in ciliogenesis regulating transports vesicles to the cilia. In Homo sapiens (Human), this protein is T-complex protein 1 subunit theta (CCT8).